Consider the following 419-residue polypeptide: Carboxypeptidase A1 (419 aa).

Residues M1 to G16 form the signal peptide. The propeptide at N17 to R110 is activation peptide. Residues T121–T414 form the Peptidase M14 domain. The Zn(2+) site is built by H179 and E182. Residues H179–E182, R237, and N254–R255 contribute to the substrate site. Cysteines 248 and 271 form a disulfide. H306 is a binding site for Zn(2+). Substrate contacts are provided by residues S307–Y308 and Y358. The active-site Proton donor/acceptor is E380.

The protein belongs to the peptidase M14 family. As to quaternary structure, monomer. Requires Zn(2+) as cofactor.

It is found in the secreted. It carries out the reaction Release of a C-terminal amino acid, but little or no action with -Asp, -Glu, -Arg, -Lys or -Pro.. Its function is as follows. Carboxypeptidase that catalyzes the release of a C-terminal amino acid, but has little or no action with -Asp, -Glu, -Arg, -Lys or -Pro. This Mus musculus (Mouse) protein is Carboxypeptidase A1 (Cpa1).